The following is a 116-amino-acid chain: Large ribosomal subunit protein bL17 (116 aa).

It belongs to the bacterial ribosomal protein bL17 family. As to quaternary structure, part of the 50S ribosomal subunit. Contacts protein L32.

This is Large ribosomal subunit protein bL17 from Chloroflexus aggregans (strain MD-66 / DSM 9485).